Here is a 131-residue protein sequence, read N- to C-terminus: Translation initiation factor 5A (131 aa).

At K36 the chain carries Hypusine.

The protein belongs to the eIF-5A family.

It localises to the cytoplasm. In terms of biological role, functions by promoting the formation of the first peptide bond. The protein is Translation initiation factor 5A (eIF5A) of Saccharolobus islandicus (strain Y.N.15.51 / Yellowstone #2) (Sulfolobus islandicus).